We begin with the raw amino-acid sequence, 79 residues long: uncharacterized protein (79 aa).

Positions 51-79 are disordered; that stretch reads PAQFPKVQRPPTLLGGKNTSTQTTLHPVI. Polar residues predominate over residues 67 to 79; sequence KNTSTQTTLHPVI.

This is an uncharacterized protein from Homo sapiens (Human).